An 84-amino-acid chain; its full sequence is U1-theraphotoxin-Hs1a (84 aa).

The N-terminal stretch at 1 to 22 (MKVTLIAILTCAAVLVLHTTAA) is a signal peptide. Positions 23–48 (EELEESQLMEVGMPDTELAAVDEERL) are excised as a propeptide. Disulfide bonds link Cys51–Cys65, Cys55–Cys76, and Cys70–Cys81.

It belongs to the neurotoxin 12 (Hwtx-2) family. 02 (Hwtx-2) subfamily. Expressed by the venom gland.

It localises to the secreted. Blocks neuromuscular transmission. Acts cooperatively to potentiate the activity of huwentoxin-I. Paralyzes locusts and kills mice following intracerebroventricular injection. The protein is U1-theraphotoxin-Hs1a of Cyriopagopus schmidti (Chinese bird spider).